Here is a 534-residue protein sequence, read N- to C-terminus: Arginine--tRNA ligase (534 aa).

The short motif at 120-130 (ANPTGFLHLGH) is the 'HIGH' region element.

The protein belongs to the class-I aminoacyl-tRNA synthetase family. As to quaternary structure, monomer.

The protein localises to the cytoplasm. It catalyses the reaction tRNA(Arg) + L-arginine + ATP = L-arginyl-tRNA(Arg) + AMP + diphosphate. The protein is Arginine--tRNA ligase of Mesomycoplasma hyopneumoniae (strain 232) (Mycoplasma hyopneumoniae).